Reading from the N-terminus, the 248-residue chain is Membrane-spanning 4-domains subfamily A member 6A (248 aa).

Over 1-46 (MTSQPVPNETIIVLPSNVINFSQAEKPEPTNQGQDSLKKHLHAEIK) the chain is Cytoplasmic. Residues 47 to 67 (VIGTIQILCGMMVLSLGIILA) form a helical membrane-spanning segment. The Extracellular portion of the chain corresponds to 68–84 (SASFSPNFTQVTSTLLN). The helical transmembrane segment at 85-105 (SAYPFIGPFFFIISGSLSIAT) threads the bilayer. Topologically, residues 106 to 116 (EKRLTKLLVHS) are cytoplasmic. The chain crosses the membrane as a helical span at residues 117–137 (SLVGSILSALSALVGFIILSV). Topologically, residues 138–185 (KQATLNPASLQCELDKNNIPTRSYVSYFYHDSLYTTDCYTAKASLAGT) are extracellular. Residues 186 to 206 (LSLMLICTLLEFCLAVLTAVL) form a helical membrane-spanning segment. Residues 207–248 (RWKQAYSDFPGSVLFLPHSYIGNSGMSSKMTHDCGYEELLTS) lie on the Cytoplasmic side of the membrane.

It belongs to the MS4A family. Variable expression in some B-cell, myelomonocytic, and erythroleukemia cell lines.

Its subcellular location is the membrane. In terms of biological role, may be involved in signal transduction as a component of a multimeric receptor complex. This is Membrane-spanning 4-domains subfamily A member 6A (MS4A6A) from Homo sapiens (Human).